Here is a 307-residue protein sequence, read N- to C-terminus: MAKPRKRGRDIDGVFLLDKPQGMSSNDIMQKVKRVFQANKAGHTGALDPLATGMLPICLGEATKFSQFLLDADKRYQVTAKLGERTDTSDAEGQVVETRDVQVDVQDILAALPHFRGNLMQVPTMFSALKHQGKPLYEYARAGITVEREARPITIFDLQFIAYDAPYLTLEVHCSKGTYIRTLVDDLGEYLGCGAHVTVLRRTAVANYPVEAMMNWDTLQVLAAQQDLALLDQHLLPTDSAVSALPALHLNQEQSKAISFGQRVKFDNPTQLTGQVRLFSDTQQFLGVALVDEHNVIRPQRLMTQNT.

The active-site Nucleophile is the Asp-48.

The protein belongs to the pseudouridine synthase TruB family. Type 1 subfamily.

It carries out the reaction uridine(55) in tRNA = pseudouridine(55) in tRNA. Functionally, responsible for synthesis of pseudouridine from uracil-55 in the psi GC loop of transfer RNAs. In Pasteurella multocida (strain Pm70), this protein is tRNA pseudouridine synthase B.